Consider the following 260-residue polypeptide: MKDIQKERDFRNMPIDKVGIKNLKYPIRVLDRKNGCQQTVGTINMYVDLPHESKGTHMSRFVEMLHILQPEISPKTFSVILDQMKKDLDAASAHMEVTFPYFIEKAAPVSGTPGFMEYTCKLMGTSRADGRVDLVSEVVVPISSVCPCSKEISDGGAHNQRGEVRLAIRSKKFVWIEDLIQLVEAAASCELYSVLKRVDEKWVTEKGYQNPKFVEDIVRDVAVALKNDTNITWFNISVENFESIHNHSAYATITCGRINP.

It belongs to the GTP cyclohydrolase IV family.

The catalysed reaction is GTP + H2O = 7,8-dihydroneopterin 3'-triphosphate + formate + H(+). It participates in cofactor biosynthesis; 7,8-dihydroneopterin triphosphate biosynthesis; 7,8-dihydroneopterin triphosphate from GTP: step 1/1. In terms of biological role, converts GTP to 7,8-dihydroneopterin triphosphate. In Desulfosudis oleivorans (strain DSM 6200 / JCM 39069 / Hxd3) (Desulfococcus oleovorans), this protein is GTP cyclohydrolase FolE2.